The chain runs to 960 residues: Phosphoenolpyruvate carboxylase 2 (960 aa).

Active-site residues include H167 and K595.

It belongs to the PEPCase type 1 family. In terms of assembly, homotetramer. Mg(2+) serves as cofactor.

It localises to the cytoplasm. The catalysed reaction is oxaloacetate + phosphate = phosphoenolpyruvate + hydrogencarbonate. It functions in the pathway photosynthesis; C3 acid pathway. Its function is as follows. Through the carboxylation of phosphoenolpyruvate (PEP) it forms oxaloacetate, a four-carbon dicarboxylic acid source for the tricarboxylic acid cycle. This is Phosphoenolpyruvate carboxylase 2 from Sorghum bicolor (Sorghum).